The following is a 63-amino-acid chain: UPF0337 protein RA1131 (63 aa).

The segment at 1–63 (MGSAKDKVAG…DAVKGAVDKT (63 aa)) is disordered. A compositionally biased stretch (low complexity) spans 34 to 49 (AKGAAQEAKGGAQQAK). Positions 51–63 (KLKDAVKGAVDKT) are enriched in basic and acidic residues.

The protein belongs to the UPF0337 (CsbD) family.

The sequence is that of UPF0337 protein RA1131 from Rhizobium meliloti (strain 1021) (Ensifer meliloti).